The following is a 100-amino-acid chain: Large ribosomal subunit protein uL23 (100 aa).

Belongs to the universal ribosomal protein uL23 family. In terms of assembly, part of the 50S ribosomal subunit. Contacts protein L29, and trigger factor when it is bound to the ribosome.

In terms of biological role, one of the early assembly proteins it binds 23S rRNA. One of the proteins that surrounds the polypeptide exit tunnel on the outside of the ribosome. Forms the main docking site for trigger factor binding to the ribosome. The polypeptide is Large ribosomal subunit protein uL23 (Sodalis glossinidius (strain morsitans)).